A 148-amino-acid polypeptide reads, in one-letter code: SsrA-binding protein (148 aa).

The disordered stretch occupies residues 129 to 148 (ETEKDRDWQREKARLMREKA).

This sequence belongs to the SmpB family.

The protein resides in the cytoplasm. Required for rescue of stalled ribosomes mediated by trans-translation. Binds to transfer-messenger RNA (tmRNA), required for stable association of tmRNA with ribosomes. tmRNA and SmpB together mimic tRNA shape, replacing the anticodon stem-loop with SmpB. tmRNA is encoded by the ssrA gene; the 2 termini fold to resemble tRNA(Ala) and it encodes a 'tag peptide', a short internal open reading frame. During trans-translation Ala-aminoacylated tmRNA acts like a tRNA, entering the A-site of stalled ribosomes, displacing the stalled mRNA. The ribosome then switches to translate the ORF on the tmRNA; the nascent peptide is terminated with the 'tag peptide' encoded by the tmRNA and targeted for degradation. The ribosome is freed to recommence translation, which seems to be the essential function of trans-translation. This chain is SsrA-binding protein, found in Ralstonia nicotianae (strain ATCC BAA-1114 / GMI1000) (Ralstonia solanacearum).